The primary structure comprises 456 residues: Phospholipase A1 member A (456 aa).

The N-terminal stretch at 1 to 25 (MRPGLWETCFWLWGPLLWLSIGSSG) is a signal peptide. The active-site Nucleophile is the serine 166. Residue aspartate 190 is the Charge relay system of the active site. Residues cysteine 245 and cysteine 258 are joined by a disulfide bond. Histidine 260 acts as the Charge relay system in catalysis. Disulfide bonds link cysteine 282-cysteine 293 and cysteine 296-cysteine 304. Asparagine 365 is a glycosylation site (N-linked (GlcNAc...) asparagine).

Belongs to the AB hydrolase superfamily. Lipase family.

It localises to the secreted. The catalysed reaction is a 1,2-diacyl-sn-glycero-3-phospho-L-serine + H2O = a 2-acyl-sn-glycero-3-phospho-L-serine + a fatty acid + H(+). It carries out the reaction 1,2-di-(9Z)-octadecenoyl-sn-glycero-3-phospho-L-serine + H2O = 2-(9Z-octadecenoyl)-sn-glycero-3-phospho-L-serine + (9Z)-octadecenoate + H(+). The enzyme catalyses 1-hexadecanoyl-2-(5Z,8Z,11Z,14Z-eicosatetraenoyl)-sn-glycero-3-phospho-L-serine + H2O = 2-(5Z,8Z,11Z,14Z)-eicosatetraenoyl-sn-glycero-3-phospho-L-serine + hexadecanoate + H(+). It catalyses the reaction a 1-acyl-sn-glycero-3-phospho-L-serine + H2O = sn-glycero-3-phospho-L-serine + a fatty acid + H(+). The catalysed reaction is 1-(9Z-octadecenoyl)-sn-glycero-3-phospho-L-serine + H2O = sn-glycero-3-phospho-L-serine + (9Z)-octadecenoate + H(+). Its function is as follows. Hydrolyzes the ester bond of the acyl group attached at the sn-1 position of phosphatidylserines (phospholipase A1 activity) and 1-acyl-2-lysophosphatidylserines (lysophospholipase activity) in the pathway of phosphatidylserines acyl chain remodeling. Cleaves phosphatidylserines exposed on the outer leaflet of the plasma membrane of apoptotic cells producing 2-acyl-1-lysophosphatidylserines, which in turn enhance mast cell activation and histamine production. Has no activity toward other glycerophospholipids including phosphatidylcholines, phosphatidylethanolamines, phosphatidic acids or phosphatidylinositols, or glycerolipids such as triolein. In Mus musculus (Mouse), this protein is Phospholipase A1 member A.